We begin with the raw amino-acid sequence, 301 residues long: 33 kDa chaperonin (301 aa).

Disulfide bonds link Cys244–Cys246 and Cys277–Cys280.

It belongs to the HSP33 family. In terms of processing, under oxidizing conditions two disulfide bonds are formed involving the reactive cysteines. Under reducing conditions zinc is bound to the reactive cysteines and the protein is inactive.

It is found in the cytoplasm. Its function is as follows. Redox regulated molecular chaperone. Protects both thermally unfolding and oxidatively damaged proteins from irreversible aggregation. Plays an important role in the bacterial defense system toward oxidative stress. The sequence is that of 33 kDa chaperonin from Geobacter sulfurreducens (strain ATCC 51573 / DSM 12127 / PCA).